A 165-amino-acid chain; its full sequence is Crossover junction endodeoxyribonuclease RuvC (165 aa).

Catalysis depends on residues Asp7, Glu67, and Asp140. Residues Asp7, Glu67, and Asp140 each contribute to the Mg(2+) site.

It belongs to the RuvC family. As to quaternary structure, homodimer which binds Holliday junction (HJ) DNA. The HJ becomes 2-fold symmetrical on binding to RuvC with unstacked arms; it has a different conformation from HJ DNA in complex with RuvA. In the full resolvosome a probable DNA-RuvA(4)-RuvB(12)-RuvC(2) complex forms which resolves the HJ. The cofactor is Mg(2+).

Its subcellular location is the cytoplasm. It catalyses the reaction Endonucleolytic cleavage at a junction such as a reciprocal single-stranded crossover between two homologous DNA duplexes (Holliday junction).. Functionally, the RuvA-RuvB-RuvC complex processes Holliday junction (HJ) DNA during genetic recombination and DNA repair. Endonuclease that resolves HJ intermediates. Cleaves cruciform DNA by making single-stranded nicks across the HJ at symmetrical positions within the homologous arms, yielding a 5'-phosphate and a 3'-hydroxyl group; requires a central core of homology in the junction. The consensus cleavage sequence is 5'-(A/T)TT(C/G)-3'. Cleavage occurs on the 3'-side of the TT dinucleotide at the point of strand exchange. HJ branch migration catalyzed by RuvA-RuvB allows RuvC to scan DNA until it finds its consensus sequence, where it cleaves and resolves the cruciform DNA. This is Crossover junction endodeoxyribonuclease RuvC from Caldanaerobacter subterraneus subsp. tengcongensis (strain DSM 15242 / JCM 11007 / NBRC 100824 / MB4) (Thermoanaerobacter tengcongensis).